The following is a 217-amino-acid chain: uncharacterized protein (217 aa).

Transmembrane regions (helical) follow at residues 9 to 29 (ISLASSVVATTVLVAPVLSTI), 54 to 74 (FLSTIIGAGYPIYKTYLLLEL), 103 to 125 (LMAYWCVYGCVTAAESILGRFLS), and 135 to 157 (IVFWLWLLNPRTQGAAFIYASYI).

The protein belongs to the DP1 family.

Its subcellular location is the endoplasmic reticulum membrane. This is an uncharacterized protein from Schizosaccharomyces pombe (strain 972 / ATCC 24843) (Fission yeast).